The following is a 412-amino-acid chain: FAD-dependent monooxygenase nscC (412 aa).

A signal peptide spans 1 to 21; sequence MGKQQETILIIGAGIAGLTTS. Glu-35 and Ala-46 together coordinate FAD. N-linked (GlcNAc...) asparagine glycosylation is present at Asn-92. Arg-119 lines the FAD pocket. N-linked (GlcNAc...) asparagine glycans are attached at residues Asn-170 and Asn-231. Residues Asp-326 and Gly-339 each coordinate FAD.

This sequence belongs to the paxM FAD-dependent monooxygenase family. FAD serves as cofactor.

The protein operates within secondary metabolite biosynthesis. In terms of biological role, FAD-dependent monooxygenase; part of the gene cluster that mediates the biosynthesis of neosartoricin B, a prenylated anthracenone that probably exhibits T-cell antiproliferative activity, suggestive of a physiological role as an immunosuppressive agent. The non-reducing polyketide synthase nscA probably synthesizes and cyclizes the decaketide backbone. The hydrolase nscB then mediates the product release through hydrolysis followed by spontaneous decarboxylation. The prenyltransferase nscD catalyzes the addition of the dimethylallyl group to the aromatic C5. The FAD-dependent monooxygenase nscC is then responsible for the stereospecific hydroxylation at C2. Neosartoricin B can be converted into two additional compounds neosartoricins C and D. Neosartoricin C is a spirocyclic compound that is cyclized through the attack of C3 hydroxyl on C14, followed by dehydration. On the other hand, neosartoricin D is a further cyclized compound in which attack of C2 on C14 in neosartoricin C results in the formation of the acetal-containing dioxabicyclo-octanone ring. Both of these compounds are novel and possibly represent related metabolites of the gene cluster. In Trichophyton verrucosum (strain HKI 0517), this protein is FAD-dependent monooxygenase nscC.